The primary structure comprises 444 residues: Spermatogenesis-associated protein 1 (444 aa).

Basic and acidic residues predominate over residues 145 to 160; the sequence is GTIHRPDSLSLSKDEP. Residues 145-229 form a disordered region; sequence GTIHRPDSLS…DEGEEDDKAT (85 aa). Residues 268–403 adopt a coiled-coil conformation; sequence SLLKIEREKI…RKLDTDKMKL (136 aa).

As to quaternary structure, interacts with IFT20.

The protein localises to the cytoplasmic vesicle. It localises to the secretory vesicle. The protein resides in the acrosome. The sequence is that of Spermatogenesis-associated protein 1 (Spata1) from Rattus norvegicus (Rat).